Consider the following 149-residue polypeptide: Ribosome maturation factor RimP (149 aa).

Belongs to the RimP family.

It is found in the cytoplasm. In terms of biological role, required for maturation of 30S ribosomal subunits. The chain is Ribosome maturation factor RimP from Neisseria meningitidis serogroup A / serotype 4A (strain DSM 15465 / Z2491).